The following is a 181-amino-acid chain: Inner membrane-spanning protein YciB (181 aa).

5 consecutive transmembrane segments (helical) span residues 10–30 (LVIFFAVYKFFDIYIASGALI), 50–70 (MHLITFAMVTVFGTLTLVFHD), 72–92 (AFIKWKVTIIYALFALALGIS), 118–138 (ITWYWVIFFATCGLVNIYVAF), and 148–168 (FKVFGLTALTLVNTVITVFYL).

It belongs to the YciB family.

The protein resides in the cell inner membrane. In terms of biological role, plays a role in cell envelope biogenesis, maintenance of cell envelope integrity and membrane homeostasis. The polypeptide is Inner membrane-spanning protein YciB (Shewanella putrefaciens (strain CN-32 / ATCC BAA-453)).